The primary structure comprises 119 residues: Large ribosomal subunit protein uL18 (119 aa).

The protein belongs to the universal ribosomal protein uL18 family. Part of the 50S ribosomal subunit; part of the 5S rRNA/L5/L18/L25 subcomplex. Contacts the 5S and 23S rRNAs.

In terms of biological role, this is one of the proteins that bind and probably mediate the attachment of the 5S RNA into the large ribosomal subunit, where it forms part of the central protuberance. This chain is Large ribosomal subunit protein uL18, found in Xanthomonas oryzae pv. oryzae (strain PXO99A).